The primary structure comprises 323 residues: Beta-ketoacyl-[acyl-carrier-protein] synthase III (323 aa).

Residues Cys-113 and His-250 contribute to the active site. The ACP-binding stretch occupies residues 251 to 255; it reads QANRR. Asn-280 is a catalytic residue.

Belongs to the thiolase-like superfamily. FabH family. In terms of assembly, homodimer.

It localises to the cytoplasm. It catalyses the reaction malonyl-[ACP] + acetyl-CoA + H(+) = 3-oxobutanoyl-[ACP] + CO2 + CoA. Its pathway is lipid metabolism; fatty acid biosynthesis. Its function is as follows. Catalyzes the condensation reaction of fatty acid synthesis by the addition to an acyl acceptor of two carbons from malonyl-ACP. Catalyzes the first condensation reaction which initiates fatty acid synthesis and may therefore play a role in governing the total rate of fatty acid production. Possesses both acetoacetyl-ACP synthase and acetyl transacylase activities. Its substrate specificity determines the biosynthesis of branched-chain and/or straight-chain of fatty acids. In Rhizobium rhizogenes (strain K84 / ATCC BAA-868) (Agrobacterium radiobacter), this protein is Beta-ketoacyl-[acyl-carrier-protein] synthase III.